We begin with the raw amino-acid sequence, 122 residues long: Large ribosomal subunit protein uL14c (122 aa).

It belongs to the universal ribosomal protein uL14 family. Part of the 50S ribosomal subunit.

The protein localises to the plastid. Its subcellular location is the chloroplast. In terms of biological role, binds to 23S rRNA. The sequence is that of Large ribosomal subunit protein uL14c from Lotus japonicus (Lotus corniculatus var. japonicus).